Here is a 453-residue protein sequence, read N- to C-terminus: Protein ECM18 (453 aa).

Positions 130 to 435 (LLIHGYAASS…SGHNLFLDNP (306 aa)) constitute an AB hydrolase-1 domain. The HXXXXD motif signature appears at 428-433 (HNLFLD).

This sequence belongs to the peptidase S33 family. ABHD4/ABHD5 subfamily.

It is found in the mitochondrion. Its function is as follows. May be involved in cell wall organization and biogenesis. This Saccharomyces cerevisiae (strain ATCC 204508 / S288c) (Baker's yeast) protein is Protein ECM18 (ECM18).